A 532-amino-acid chain; its full sequence is Muscarinic acetylcholine receptor M5 (532 aa).

Over 1–29 (MEGDSYHNATTVNGTPVYHQPLERHRLWE) the chain is Extracellular. N-linked (GlcNAc...) asparagine glycosylation occurs at N8. Residues 30–53 (VISIAAVTAVVSLITIVGNVLVMI) form a helical membrane-spanning segment. Residues 54–66 (SFKVNSQLKTVNN) are Cytoplasmic-facing. The helical transmembrane segment at 67 to 87 (YYLLSLACADLIIGIFSMNLY) threads the bilayer. Over 88–104 (TTYILMGRWALGSLACD) the chain is Extracellular. C103 and C183 are oxidised to a cystine. The chain crosses the membrane as a helical span at residues 105–126 (LWLALDYVASNASVMNLLVISF). Over 127–146 (DRYFSITRPLTYRAKRTPKR) the chain is Cytoplasmic. The helical transmembrane segment at 147–169 (AGVMIGLAWLISFILWAPAILCW) threads the bilayer. Residues 170–191 (QYLVGKRTVPLDECQIQFLSEP) lie on the Extracellular side of the membrane. Residues 192–214 (TITFGTAIAAFYIPVSVMTILYC) traverse the membrane as a helical segment. Topologically, residues 215–443 (RIYRETEKRT…LVKERKAAQT (229 aa)) are cytoplasmic. Positions 262-365 (AQRERNQTSW…SDTPNYFLSP (104 aa)) are disordered. Over residues 269 to 281 (TSWSSSRRSASTS) the composition is skewed to low complexity. Residues 282–308 (GKPSQATDPSTNQAKAEQLTTCSSYPS) are compositionally biased toward polar residues. A helical membrane pass occupies residues 444 to 464 (LSAILLAFIITWTPYNIMVLV). At 465–478 (STFCDKCVPVTLWH) the chain is on the extracellular side. A helical transmembrane segment spans residues 479–498 (LGYWLCYVNSTVNPICYALC). At 499–532 (NRTFRKTFKMLLLCRWKKKKVEEKLYWQGNSKLP) the chain is on the cytoplasmic side. Residues T501 and T505 each carry the phosphothreonine modification.

Belongs to the G-protein coupled receptor 1 family. Muscarinic acetylcholine receptor subfamily. CHRM5 sub-subfamily.

It localises to the cell membrane. Its subcellular location is the postsynaptic cell membrane. Its function is as follows. The muscarinic acetylcholine receptor mediates various cellular responses, including inhibition of adenylate cyclase, breakdown of phosphoinositides and modulation of potassium channels through the action of G proteins. Primary transducing effect is Pi turnover. The polypeptide is Muscarinic acetylcholine receptor M5 (CHRM5) (Macaca mulatta (Rhesus macaque)).